The sequence spans 282 residues: tRNA pseudouridine synthase B (282 aa).

The Nucleophile role is filled by aspartate 39.

It belongs to the pseudouridine synthase TruB family. Type 1 subfamily.

It carries out the reaction uridine(55) in tRNA = pseudouridine(55) in tRNA. Its function is as follows. Responsible for synthesis of pseudouridine from uracil-55 in the psi GC loop of transfer RNAs. This chain is tRNA pseudouridine synthase B, found in Borreliella burgdorferi (strain ATCC 35210 / DSM 4680 / CIP 102532 / B31) (Borrelia burgdorferi).